The chain runs to 399 residues: Elongation factor Tu (399 aa).

One can recognise a tr-type G domain in the interval 10–209 (KPHVNIGTIG…DVDEYIPTPV (200 aa)). The interval 19–26 (GHVDHGKT) is G1. 19 to 26 (GHVDHGKT) contacts GTP. Threonine 26 serves as a coordination point for Mg(2+). The interval 62–66 (GITIN) is G2. The segment at 83-86 (DCPG) is G3. GTP contacts are provided by residues 83 to 87 (DCPGH) and 138 to 141 (NKCD). The tract at residues 138–141 (NKCD) is G4. The G5 stretch occupies residues 175 to 177 (SAY).

This sequence belongs to the TRAFAC class translation factor GTPase superfamily. Classic translation factor GTPase family. EF-Tu/EF-1A subfamily. As to quaternary structure, monomer.

Its subcellular location is the cytoplasm. The enzyme catalyses GTP + H2O = GDP + phosphate + H(+). In terms of biological role, GTP hydrolase that promotes the GTP-dependent binding of aminoacyl-tRNA to the A-site of ribosomes during protein biosynthesis. The polypeptide is Elongation factor Tu (Bifidobacterium animalis subsp. lactis (strain AD011)).